A 449-amino-acid polypeptide reads, in one-letter code: uncharacterized protein (449 aa).

Residue Ser-420 is modified to Phosphoserine.

It belongs to the NAD kinase family.

Its subcellular location is the cytoplasm. It is found in the nucleus. This is an uncharacterized protein from Schizosaccharomyces pombe (strain 972 / ATCC 24843) (Fission yeast).